A 109-amino-acid polypeptide reads, in one-letter code: Nucleoid-associated protein ECA1177 (109 aa).

Belongs to the YbaB/EbfC family. Homodimer.

The protein localises to the cytoplasm. It is found in the nucleoid. In terms of biological role, binds to DNA and alters its conformation. May be involved in regulation of gene expression, nucleoid organization and DNA protection. In Pectobacterium atrosepticum (strain SCRI 1043 / ATCC BAA-672) (Erwinia carotovora subsp. atroseptica), this protein is Nucleoid-associated protein ECA1177.